The chain runs to 78 residues: Large ribosomal subunit protein bL28 (78 aa).

Residues 1–28 (MSRRCQVRGTKPEFGNNVSHSQRHTKRR) form a disordered region.

This sequence belongs to the bacterial ribosomal protein bL28 family.

The polypeptide is Large ribosomal subunit protein bL28 (Cutibacterium acnes (strain DSM 16379 / KPA171202) (Propionibacterium acnes)).